Reading from the N-terminus, the 379-residue chain is 3-isopropylmalate dehydrogenase 1 (379 aa).

4 residues coordinate substrate: R101, R111, R139, and D230. Mg(2+) is bound by residues D230, D254, and D258. 293–305 (GSAPDIAGKGIAN) provides a ligand contact to NAD(+).

It belongs to the isocitrate and isopropylmalate dehydrogenases family. LeuB type 1 subfamily. In terms of assembly, homodimer. Mg(2+) serves as cofactor. Mn(2+) is required as a cofactor.

It localises to the cytoplasm. The catalysed reaction is (2R,3S)-3-isopropylmalate + NAD(+) = 4-methyl-2-oxopentanoate + CO2 + NADH. It participates in amino-acid biosynthesis; L-leucine biosynthesis; L-leucine from 3-methyl-2-oxobutanoate: step 3/4. Catalyzes the oxidation of 3-carboxy-2-hydroxy-4-methylpentanoate (3-isopropylmalate) to 3-carboxy-4-methyl-2-oxopentanoate. The product decarboxylates to 4-methyl-2 oxopentanoate. The protein is 3-isopropylmalate dehydrogenase 1 of Bradyrhizobium diazoefficiens (strain JCM 10833 / BCRC 13528 / IAM 13628 / NBRC 14792 / USDA 110).